Consider the following 226-residue polypeptide: ATP synthase subunit a (226 aa).

The next 6 helical transmembrane spans lie at 22-42 (SMNWLFMMLPIIIFPSIFWLI), 73-93 (IIIFISLMLYIMITNIFSLIP), 102-122 (LLLNMILSLTLWFSFLIYLIY), 135-155 (LNSPVFLMNFMVIIELISLII), 173-193 (LILTLLGIFISNFISILPINL), and 202-222 (LEIFMSMIQSYVFSILLILYF).

Belongs to the ATPase A chain family. In terms of assembly, F-type ATPases have 2 components, CF(1) - the catalytic core - and CF(0) - the membrane proton channel. CF(1) has five subunits: alpha(3), beta(3), gamma(1), delta(1), epsilon(1). CF(0) has three main subunits: a, b and c.

Its subcellular location is the mitochondrion inner membrane. In terms of biological role, mitochondrial membrane ATP synthase (F(1)F(0) ATP synthase or Complex V) produces ATP from ADP in the presence of a proton gradient across the membrane which is generated by electron transport complexes of the respiratory chain. F-type ATPases consist of two structural domains, F(1) - containing the extramembraneous catalytic core and F(0) - containing the membrane proton channel, linked together by a central stalk and a peripheral stalk. During catalysis, ATP synthesis in the catalytic domain of F(1) is coupled via a rotary mechanism of the central stalk subunits to proton translocation. Key component of the proton channel; it may play a direct role in the translocation of protons across the membrane. This chain is ATP synthase subunit a (ATP6), found in Apis mellifera ligustica (Common honeybee).